We begin with the raw amino-acid sequence, 313 residues long: Ribosomal RNA small subunit methyltransferase H (313 aa).

S-adenosyl-L-methionine-binding positions include 33–35 (GGH), aspartate 53, phenylalanine 80, aspartate 102, and glutamine 109. The disordered stretch occupies residues 291–313 (SDEEMRANPRAQSAKLRAAEKIR).

Belongs to the methyltransferase superfamily. RsmH family.

The protein resides in the cytoplasm. The enzyme catalyses cytidine(1402) in 16S rRNA + S-adenosyl-L-methionine = N(4)-methylcytidine(1402) in 16S rRNA + S-adenosyl-L-homocysteine + H(+). Functionally, specifically methylates the N4 position of cytidine in position 1402 (C1402) of 16S rRNA. The sequence is that of Ribosomal RNA small subunit methyltransferase H from Heliobacterium modesticaldum (strain ATCC 51547 / Ice1).